A 144-amino-acid chain; its full sequence is Large ribosomal subunit protein uL15 (144 aa).

Positions M1 to R60 are disordered. The segment covering R21–G31 has biased composition (gly residues).

It belongs to the universal ribosomal protein uL15 family. In terms of assembly, part of the 50S ribosomal subunit.

Functionally, binds to the 23S rRNA. This is Large ribosomal subunit protein uL15 from Hahella chejuensis (strain KCTC 2396).